The chain runs to 283 residues: Bifunctional protein FolD (283 aa).

NADP(+) contacts are provided by residues Gly165–Gly167, Thr192, and Val233.

It belongs to the tetrahydrofolate dehydrogenase/cyclohydrolase family. Homodimer.

It carries out the reaction (6R)-5,10-methylene-5,6,7,8-tetrahydrofolate + NADP(+) = (6R)-5,10-methenyltetrahydrofolate + NADPH. The catalysed reaction is (6R)-5,10-methenyltetrahydrofolate + H2O = (6R)-10-formyltetrahydrofolate + H(+). It participates in one-carbon metabolism; tetrahydrofolate interconversion. Catalyzes the oxidation of 5,10-methylenetetrahydrofolate to 5,10-methenyltetrahydrofolate and then the hydrolysis of 5,10-methenyltetrahydrofolate to 10-formyltetrahydrofolate. In Thermobifida fusca (strain YX), this protein is Bifunctional protein FolD.